The following is a 200-amino-acid chain: Phospholipase A2 inhibitor gamma subunit B (200 aa).

The first 19 residues, 1–19, serve as a signal peptide directing secretion; sequence MKFLLFCCLFGTFLATGMC. Cystine bridges form between cysteine 22/cysteine 46, cysteine 25/cysteine 32, cysteine 39/cysteine 67, cysteine 73/cysteine 94, cysteine 95/cysteine 100, cysteine 120/cysteine 145, cysteine 138/cysteine 165, and cysteine 171/cysteine 191.

Belongs to the CNF-like-inhibitor family. In terms of assembly, heteromer composed of subunit A and subunit B.

The protein resides in the secreted. Inhibits the enzymatic activity of the phospholipase A2 (PLA2). In Elaphe climacophora (Japanese rat snake), this protein is Phospholipase A2 inhibitor gamma subunit B.